The following is a 531-amino-acid chain: Arginine--tRNA ligase (531 aa).

A 'HIGH' region motif is present at residues 113–123 (ANPTGPLHIGH).

Belongs to the class-I aminoacyl-tRNA synthetase family. Monomer.

The protein localises to the cytoplasm. The enzyme catalyses tRNA(Arg) + L-arginine + ATP = L-arginyl-tRNA(Arg) + AMP + diphosphate. This chain is Arginine--tRNA ligase, found in Campylobacter fetus subsp. fetus (strain 82-40).